The sequence spans 1407 residues: Trichohyalin (1407 aa).

Residues 1–91 (MSPLLKSIID…AQAAYYALGQ (91 aa)) form an S-100-like region. EF-hand domains lie at 23–48 (CDGAVLKKKDLKILLDREFGAVLQRP) and 49–84 (HDPETVDVMLELLDRDSDGLVGFDEFCLLIFKLAQA). Ca(2+) is bound by residues D32, D62, D64, D66, and E73. 7 disordered regions span residues 148-172 (EEEEQRKKRERFEQHYSRQYRDKEQ), 218-237 (LREEEQQRRERREQHERALQ), 362-471 (REQA…EEEQ), 486-587 (EQLQ…ERER), 1014-1033 (REEERLRRQERDRKFREEER), 1062-1082 (KEEKQLRRQERDRKFREEEQQ), and 1313-1407 (EQFA…QYRP). 4 stretches are compositionally biased toward basic and acidic residues: residues 362 to 381 (REQARERGESLTRRWQRQLE), 396 to 424 (RRQEEQSLRQDQERRQRQERERELEEQAR), 447 to 471 (SLRERQLRAEERQEQEQRFREEEEQ), and 554 to 587 (QREKRRQEREREYREEEKLQREEDEKRRRQERER). Basic and acidic residues predominate over residues 1313–1376 (EQFAREEKSR…FREDQSRRQV (64 aa)).

Belongs to the S100-fused protein family. As to quaternary structure, homodimer. Post-translationally, substrate of transglutaminase. Some 200 arginines are probably converted to citrullines by peptidylarginine deimidase. Found in the hard keratinizing tissues such as the inner root sheath (IRS) of hair follicles and medulla, and in the filiform papillae of dorsal tongue epithelium.

In terms of biological role, intermediate filament-associated protein that associates in regular arrays with keratin intermediate filaments (KIF) of the inner root sheath cells of the hair follicle and the granular layer of the epidermis. It later becomes cross-linked to KIF by isodipeptide bonds. It may serve as scaffold protein, together with involucrin, in the organization of the cell envelope or even anchor the cell envelope to the KIF network. It may be involved in its own calcium-dependent postsynthetic processing during terminal differentiation. This chain is Trichohyalin (TCHH), found in Oryctolagus cuniculus (Rabbit).